We begin with the raw amino-acid sequence, 706 residues long: Fatty acid oxidation complex subunit alpha (706 aa).

Residues 1 to 188 (MDKSFTLNRL…KMGLVDDVVP (188 aa)) form an enoyl-CoA hydratase region. The interval 308–706 (KAVNKVMVLG…MAESGSKFYE (399 aa)) is 3-hydroxyacyl-CoA dehydrogenase.

It in the N-terminal section; belongs to the enoyl-CoA hydratase/isomerase family. This sequence in the central section; belongs to the 3-hydroxyacyl-CoA dehydrogenase family. Heterotetramer of two alpha chains (FadJ) and two beta chains (FadI).

Its subcellular location is the cytoplasm. The enzyme catalyses a (3S)-3-hydroxyacyl-CoA = a (2E)-enoyl-CoA + H2O. It catalyses the reaction a 4-saturated-(3S)-3-hydroxyacyl-CoA = a (3E)-enoyl-CoA + H2O. It carries out the reaction a (3S)-3-hydroxyacyl-CoA + NAD(+) = a 3-oxoacyl-CoA + NADH + H(+). The catalysed reaction is (3S)-3-hydroxybutanoyl-CoA = (3R)-3-hydroxybutanoyl-CoA. The protein operates within lipid metabolism; fatty acid beta-oxidation. Functionally, catalyzes the formation of a hydroxyacyl-CoA by addition of water on enoyl-CoA. Also exhibits 3-hydroxyacyl-CoA epimerase and 3-hydroxyacyl-CoA dehydrogenase activities. This is Fatty acid oxidation complex subunit alpha from Shewanella loihica (strain ATCC BAA-1088 / PV-4).